The primary structure comprises 577 residues: Moesin (577 aa).

Positions 2-295 (PKTISVRVTT…GNHELYMRRR (294 aa)) constitute an FERM domain. At Ser-74 the chain carries Phosphoserine. Residue Lys-79 is modified to N6-acetyllysine. Lys-83 bears the N6-succinyllysine mark. The [IL]-x-C-x-x-[DE] motif motif lies at 115-120 (IYCPPE). Tyr-116 carries the phosphotyrosine modification. Cys-117 carries the post-translational modification S-nitrosocysteine. 2 positions are modified to N6-acetyllysine: Lys-139 and Lys-165. Disordered stretches follow at residues 322–342 (LLEN…KIER), 358–419 (TKKA…QLAS), and 468–518 (STPH…NERV). Basic and acidic residues predominate over residues 358–401 (TKKAQQELEEQTRRALELEQERKRAQSEAEKLAKERQEAEEAKE). Position 407 is a phosphoserine (Ser-407). The segment covering 492 to 518 (AELRADAMAKDRSEEERTTEAEKNERV) has biased composition (basic and acidic residues). The residue at position 527 (Ser-527) is a Phosphoserine. Thr-558 carries the phosphothreonine; by ROCK2 and STK10 modification.

In terms of assembly, in resting T-cells, part of a PAG1-NHERF1-MSN complex which is disrupted upon TCR activation. Interacts with NHERF1. Interacts with PPP1R16B. Interacts with SELPLG and SYK; these interactions mediate the activation of SYK by SELPLG. Interacts with PDPN (via cytoplasmic domain); this interaction activates RHOA and promotes epithelial-mesenchymal transition. Interacts with SPN/CD43 cytoplasmic tail. Interacts with CD44. Interacts with ICAM2. Interacts with ICAM3 (via C-terminus). Interacts with PDZD8. Interacts with F-actin. Interacts with CD46. Interacts with PTPN6. In terms of processing, phosphorylation on Thr-558 by STK10 negatively regulates lymphocyte migration and polarization. Phosphorylation on Thr-558 is crucial for the formation of microvilli-like structures. Phosphorylation by ROCK2 suppresses the head-to-tail association of the N-terminal and C-terminal halves resulting in an opened conformation which is capable of actin and membrane-binding. Post-translationally, S-nitrosylation of Cys-117 is induced by interferon-gamma and oxidatively-modified low-densitity lipoprotein (LDL(ox)) implicating the iNOS-S100A8/9 transnitrosylase complex.

The protein localises to the cell membrane. Its subcellular location is the cytoplasm. It is found in the cytoskeleton. The protein resides in the apical cell membrane. It localises to the cell projection. The protein localises to the microvillus membrane. Its subcellular location is the microvillus. Functionally, ezrin-radixin-moesin (ERM) family protein that connects the actin cytoskeleton to the plasma membrane and thereby regulates the structure and function of specific domains of the cell cortex. Tethers actin filaments by oscillating between a resting and an activated state providing transient interactions between moesin and the actin cytoskeleton. Once phosphorylated on its C-terminal threonine, moesin is activated leading to interaction with F-actin and cytoskeletal rearrangement. These rearrangements regulate many cellular processes, including cell shape determination, membrane transport, and signal transduction. The role of moesin is particularly important in immunity acting on both T and B-cells homeostasis and self-tolerance, regulating lymphocyte egress from lymphoid organs. Modulates phagolysosomal biogenesis in macrophages. Also participates in immunologic synapse formation. The polypeptide is Moesin (Mus musculus (Mouse)).